The following is an 827-amino-acid chain: Leucine--tRNA ligase (827 aa).

Residues 42-52 carry the 'HIGH' region motif; the sequence is PYPSGNLHMGH. Positions 583 to 587 match the 'KMSKS' region motif; that stretch reads KMSKS. An ATP-binding site is contributed by K586.

It belongs to the class-I aminoacyl-tRNA synthetase family.

The protein resides in the cytoplasm. The catalysed reaction is tRNA(Leu) + L-leucine + ATP = L-leucyl-tRNA(Leu) + AMP + diphosphate. The sequence is that of Leucine--tRNA ligase from Desulfitobacterium hafniense (strain DSM 10664 / DCB-2).